Reading from the N-terminus, the 348-residue chain is Type IV methyl-directed restriction enzyme EcoKMcrBC (348 aa).

In terms of biological role, modifies the specificity of McrB restriction by expanding the range of modified sequences restricted. Does not bind to DNA. This Escherichia coli (strain K12) protein is Type IV methyl-directed restriction enzyme EcoKMcrBC (mcrC).